Here is a 165-residue protein sequence, read N- to C-terminus: Protein SprT (165 aa).

A SprT-like domain is found at 20–163 (EKLAQANLKL…RCVHCGEQLV (144 aa)). Histidine 78 is a Zn(2+) binding site. Glutamate 79 is a catalytic residue. Histidine 82 provides a ligand contact to Zn(2+).

It belongs to the SprT family. It depends on Zn(2+) as a cofactor.

It is found in the cytoplasm. The polypeptide is Protein SprT (Escherichia coli O127:H6 (strain E2348/69 / EPEC)).